A 158-amino-acid chain; its full sequence is 3-hydroxyacyl-[acyl-carrier-protein] dehydratase FabZ (158 aa).

The active site involves His57.

It belongs to the thioester dehydratase family. FabZ subfamily.

It localises to the cytoplasm. It catalyses the reaction a (3R)-hydroxyacyl-[ACP] = a (2E)-enoyl-[ACP] + H2O. Its function is as follows. Involved in unsaturated fatty acids biosynthesis. Catalyzes the dehydration of short chain beta-hydroxyacyl-ACPs and long chain saturated and unsaturated beta-hydroxyacyl-ACPs. The chain is 3-hydroxyacyl-[acyl-carrier-protein] dehydratase FabZ from Helicobacter acinonychis (strain Sheeba).